We begin with the raw amino-acid sequence, 1857 residues long: Peripheral-type benzodiazepine receptor-associated protein 1 (1857 aa).

Disordered regions lie at residues 1-103 (MEQL…RPED), 284-321 (QRETLPLPPSWPPGPALQARAGAPAPGAPGEATPQEDA), and 565-629 (PKDL…DTAS). The segment covering 55–67 (LRSEESSKPKGDG) has biased composition (basic and acidic residues). A compositionally biased stretch (polar residues) spans 87-96 (LGQQASSSGP). The segment covering 289–298 (PLPPSWPPGP) has biased composition (pro residues). Low complexity-rich tracts occupy residues 299-316 (ALQARAGAPAPGAPGEAT) and 603-616 (SLSNSSHSESIHNS). One can recognise an SH3 1 domain in the interval 653 to 720 (ARIQVFLARY…PSNFVERVSD (68 aa)). The interval 729 to 789 (PELADLSHSS…PSPEGLGEPP (61 aa)) is disordered. Over residues 755–764 (GGQSSVGRSQ) the composition is skewed to low complexity. Fibronectin type-III domains lie at 791–882 (VPYP…ARAG), 884–976 (VPSQ…TLPA), and 981–1081 (APLD…LAPA). 3 disordered regions span residues 1083-1311 (LPAR…SDEE), 1330-1479 (FSIP…CSRG), and 1501-1601 (YDSE…RGVR). Low complexity predominate over residues 1098–1116 (ARAPLASASPGPGDPSSPL). Basic and acidic residues predominate over residues 1138–1147 (EMAKGSHEDP). Positions 1201 to 1218 (ASSSTQGARAQQAPNTEM) are enriched in polar residues. Residues 1259–1274 (DIQEEEEEEEEEEEEE) are compositionally biased toward acidic residues. Residues 1278–1292 (RTCSFQKQVAGNSIR) show a composition bias toward polar residues. Positions 1333–1346 (PEEEEEEEEDEEEE) are enriched in acidic residues. Basic and acidic residues-rich tracts occupy residues 1420-1429 (RPPDPREHCS) and 1554-1586 (AWEKGEPERRGRSATGRAKEPLSRATETGEARG). In terms of domain architecture, SH3 2 spans 1625–1693 (LPVRIFVALF…PCNMVAEVAV (69 aa)). 2 disordered regions span residues 1723 to 1761 (VYSTAHTTGPPPKPRRSKKAESEGPAQPCPGPPKLVPSA) and 1823 to 1857 (SNFLEGPGPEAGGLDREPRTPQAESQRTRRRRVQC). The SH3 3 domain occupies 1764–1831 (KAPHSMVAAF…PSNFLEGPGP (68 aa)).

The protein belongs to the RIMBP family. In terms of assembly, interacts with RIMS1 and RIMS2. Interacts with TSPO. Interacts with CACNA1A. Predominantly expressed in brain, pituitary gland and thymus in adults. In adult brain, highest expression found in temporal lobe and the putamen, followed by amygdala, caudate nucleus, cerebral cortex, occipital and frontal lobe. A high expression level is also observed in fetal tissues like brain, heart, kidney and thymus.

The protein resides in the cytoplasm. It is found in the mitochondrion. In terms of biological role, required for synaptic transmission regulation. It probably controls the recruitement of voltage-gated calcium channels to the presynaptic membrane, and modulates neurotransmitter release. This is Peripheral-type benzodiazepine receptor-associated protein 1 from Homo sapiens (Human).